A 52-amino-acid polypeptide reads, in one-letter code: Protein YabQ (52 aa).

Identified as a multicopy suppressor of the slow growth phenotype of an rsgA (yjeQ) deletion mutant. The protein is Protein YabQ (yabQ) of Escherichia coli (strain K12).